The sequence spans 70 residues: uncharacterized protein (70 aa).

This is an uncharacterized protein from Treponema pallidum (strain Nichols).